Consider the following 151-residue polypeptide: MAERTFVAIKPDGVQRGLVGEILGRFERKGFKLVGLKQITPSRALAEEHYGVHKERPFFAGLVGFITSGPVVAMVWEGDGVIASARKLIGATKPLESEPGTIRGDLAVNIGRNVIHGSDAPETAEFEIGLWFQPSELNDWSPSDQAWRVED.

K10, F58, R86, T92, R103, and N113 together coordinate ATP. H116 acts as the Pros-phosphohistidine intermediate in catalysis.

Belongs to the NDK family. As to quaternary structure, homotetramer. The cofactor is Mg(2+).

The protein resides in the cytoplasm. It carries out the reaction dZDP + ATP = dZTP + ADP. The catalysed reaction is a 2'-deoxyribonucleoside 5'-diphosphate + ATP = a 2'-deoxyribonucleoside 5'-triphosphate + ADP. It catalyses the reaction a ribonucleoside 5'-diphosphate + ATP = a ribonucleoside 5'-triphosphate + ADP. The protein operates within purine metabolism. Functionally, major role in the synthesis of nucleoside triphosphates other than ATP. The ATP gamma phosphate is transferred to the NDP beta phosphate via a ping-pong mechanism, using a phosphorylated active-site intermediate. (Microbial infection) Catalyzes the phosphorylation of dZDP to dZTP, when the bacterium is infected by a phage that produces the substrate for the synthesis of dZTP (2- amino-2'-deoxyadenosine 5'-triphosphate), which is then used by the phage as a DNA polymerase substrate. The polypeptide is Nucleoside diphosphate kinase (Synechococcus sp. (strain CC9902)).